The chain runs to 139 residues: MRLTQGCFSFLPDLTDTQIEKQVAYAMNKGWAMNVEWTDDPHPRNNYWELWGLPLFDIKDPATVMFELNEARKSCASGYIRINAFDASYGVESCVMSFITNRPATEPGFYLDRTEGPGRQVIYSIKSYSVQANPEGSRY.

This sequence belongs to the RuBisCO small chain family. In terms of assembly, heterohexadecamer of 8 large and 8 small subunits.

It localises to the plastid. The protein resides in the chloroplast. RuBisCO catalyzes two reactions: the carboxylation of D-ribulose 1,5-bisphosphate, the primary event in carbon dioxide fixation, as well as the oxidative fragmentation of the pentose substrate in the photorespiration process. Both reactions occur simultaneously and in competition at the same active site. Although the small subunit is not catalytic it is essential for maximal activity. The polypeptide is Ribulose bisphosphate carboxylase small subunit (Thalassiosira nordenskioeldii (Marine diatom)).